The chain runs to 117 residues: Immunoglobulin heavy variable 5-51 (117 aa).

An N-terminal signal peptide occupies residues 1-19 (MGSTAILALLLAVLQGVCA). The interval 20–44 (EVQLVQSGAEVKKPGESLKISCKGS) is framework-1. One can recognise an Ig-like domain in the interval 20–117 (EVQLVQSGAE…SDTAMYYCAR (98 aa)). Cys41 and Cys115 are disulfide-bonded. Positions 45-52 (GYSFTSYW) are complementarity-determining-1. Residues 53–69 (IGWVRQMPGKGLEWMGI) are framework-2. Positions 70–77 (IYPGDSDT) are complementarity-determining-2. The interval 78 to 115 (RYSPSFQGQVTISADKSISTAYLQWSSLKASDTAMYYC) is framework-3. The complementarity-determining-3 stretch occupies residues 116–117 (AR).

As to quaternary structure, immunoglobulins are composed of two identical heavy chains and two identical light chains; disulfide-linked.

The protein localises to the secreted. It is found in the cell membrane. Functionally, v region of the variable domain of immunoglobulin heavy chains that participates in the antigen recognition. Immunoglobulins, also known as antibodies, are membrane-bound or secreted glycoproteins produced by B lymphocytes. In the recognition phase of humoral immunity, the membrane-bound immunoglobulins serve as receptors which, upon binding of a specific antigen, trigger the clonal expansion and differentiation of B lymphocytes into immunoglobulins-secreting plasma cells. Secreted immunoglobulins mediate the effector phase of humoral immunity, which results in the elimination of bound antigens. The antigen binding site is formed by the variable domain of one heavy chain, together with that of its associated light chain. Thus, each immunoglobulin has two antigen binding sites with remarkable affinity for a particular antigen. The variable domains are assembled by a process called V-(D)-J rearrangement and can then be subjected to somatic hypermutations which, after exposure to antigen and selection, allow affinity maturation for a particular antigen. The protein is Immunoglobulin heavy variable 5-51 of Homo sapiens (Human).